We begin with the raw amino-acid sequence, 83 residues long: MQTAYWVMVMMMVWITAPLSEGGKLNNVIRGLVPDDVTPKRISQSLISRRRFDSRIMFVPSCIWKTCPSYLHGDNYDLKEKDK.

An N-terminal signal peptide occupies residues 1 to 22 (MQTAYWVMVMMMVWITAPLSEG). Positions 23–55 (GKLNNVIRGLVPDDVTPKRISQSLISRRRFDSR) are excised as a propeptide. Cys-62 and Cys-67 are oxidised to a cystine. Trp-64 is subject to D-tryptophan. Pro-68 bears the 4-hydroxyproline mark. A propeptide spanning residues 71–83 (LHGDNYDLKEKDK) is cleaved from the precursor.

Belongs to the conotoxin C superfamily. Consomatin family. Expressed by the venom duct.

Its subcellular location is the secreted. Its function is as follows. Moderately activates human somatostatin receptors (SSTR) with a preferential activation of SSTR1 and SSTR4. In vivo, does not cause behavioral changes in mice within a few minutes of intracranial injection, but causes a progressive loss of movement thereafter. Four to five hours after injection, mice recover, even with the highest dose tested. Shows antinociception and antihyperalgesia activities in two mouse models of acute pain, most probably by acting outside the central nervous system. The sequence is that of Consomatin Rs1 from Conus raulsilvai (Sea snail).